The following is a 1603-amino-acid chain: DNA polymerase theta (1603 aa).

Residues 38–208 enclose the Helicase ATP-binding domain; that stretch reads EARQFEDQHL…WLDGAKVFEA (171 aa). 51–58 serves as a coordination point for ATP; it reads APTSAGKS. A DEAH box motif is present at residues 149 to 152; that stretch reads DEMH. A Helicase C-terminal domain is found at 283–434; the sequence is TDSSLLEILK…GVLTRKRDAE (152 aa).

This sequence belongs to the DNA polymerase type-A family.

The protein localises to the nucleus. It carries out the reaction DNA(n) + a 2'-deoxyribonucleoside 5'-triphosphate = DNA(n+1) + diphosphate. Functionally, DNA polymerase that promotes microhomology-mediated end-joining (MMEJ), an alternative non-homologous end-joining (NHEJ) machinery triggered in response to double-strand breaks in DNA. MMEJ is an error-prone repair pathway that produces deletions of sequences from the strand being repaired and promotes genomic rearrangements, such as telomere fusions. Required to prevent extensive loss of sequences near G-quadruplex (G4) DNA sites, which are prone to cause genome alterations, by generating deletions. This chain is DNA polymerase theta, found in Caenorhabditis elegans.